The primary structure comprises 972 residues: Fibroblast growth factor receptor (972 aa).

The N-terminal stretch at 1–43 (MSLPRCPRTRTVMFSRTLTRCYPQRTLWIAILCVICSWTLSTA) is a signal peptide. At 44–547 (GATTIRDKEV…NNMQPTSKTQ (504 aa)) the chain is on the extracellular side. Residues 57 to 152 (APQDLTAIPV…YIEASGTPPI (96 aa)) form the Fibronectin type-III domain. 12 N-linked (GlcNAc...) asparagine glycosylation sites follow: Asn109, Asn121, Asn191, Asn203, Asn239, Asn272, Asn315, Asn390, Asn398, Asn419, Asn422, and Asn460. The 93-residue stretch at 150-242 (PPIPPTLRRN…GQPIHVNFTL (93 aa)) folds into the Ig-like C2-type 1 domain. Cys176 and Cys226 form a disulfide bridge. Ig-like C2-type domains are found at residues 282-374 (PRFT…YDVK) and 383-517 (PIMS…AYLD). An intrachain disulfide couples Cys306 to Cys358. Cys403 and Cys501 form a disulfide bridge. Residues 548–568 (LIIFSVVGFVVVLILVTCIAI) traverse the membrane as a helical segment. At 569–972 (LCKQTQVRHR…QTRDCCPYAN (404 aa)) the chain is on the cytoplasmic side. Residues 639–925 (LTVGKTIGEG…ISVSSNQDYL (287 aa)) enclose the Protein kinase domain. ATP-binding positions include 645–653 (IGEGAFGKV) and Lys673. The active-site Proton acceptor is the Asp781. Tyr812 carries the phosphotyrosine; by autocatalysis modification.

The protein belongs to the protein kinase superfamily. Tyr protein kinase family. Fibroblast growth factor receptor subfamily.

The protein localises to the membrane. The enzyme catalyses L-tyrosyl-[protein] + ATP = O-phospho-L-tyrosyl-[protein] + ADP + H(+). Its function is as follows. Receptor for basic fibroblast growth factor. The chain is Fibroblast growth factor receptor (FGFR) from Strongylocentrotus purpuratus (Purple sea urchin).